The chain runs to 291 residues: uncharacterized protein (291 aa).

The tract at residues 77–140 (TVPQSSPTAI…PPTPVVEKSP (64 aa)) is disordered. A compositionally biased stretch (pro residues) spans 125-134 (PVTPAHPPTP).

This is an uncharacterized protein from Synechocystis sp. (strain ATCC 27184 / PCC 6803 / Kazusa).